The primary structure comprises 412 residues: Short-chain specific acyl-CoA dehydrogenase, mitochondrial (412 aa).

A mitochondrion-targeting transit peptide spans 1 to 24; the sequence is MAAALLARARGPLRRALGVRDWRR. Threonine 27 carries the phosphothreonine modification. At lysine 51 the chain carries N6-acetyllysine; alternate. At lysine 51 the chain carries N6-succinyllysine; alternate. At lysine 72 the chain carries N6-acetyllysine. The residue at position 129 (lysine 129) is an N6-acetyllysine; alternate. An N6-succinyllysine; alternate modification is found at lysine 129. FAD is bound by residues 152 to 161 and 185 to 187; these read FALSEPGNGS and WIT. Serine 161 is a substrate binding site. Lysine 208 bears the N6-acetyllysine mark. Lysine 262 is modified (N6-acetyllysine; alternate). N6-succinyllysine; alternate is present on lysine 262. 269–272 serves as a coordination point for substrate; the sequence is DMGR. Lysine 292 carries the N6-acetyllysine modification. Residue arginine 297 coordinates FAD. Lysine 306 carries the N6-acetyllysine; alternate modification. Lysine 306 carries the N6-succinyllysine; alternate modification. Residues glutamine 308 and 365–369 each bind FAD; that span reads QILGG. Glutamate 392 acts as the Proton acceptor in catalysis. Glycine 393 serves as a coordination point for substrate. FAD is bound at residue 394–396; it reads TSE.

Belongs to the acyl-CoA dehydrogenase family. In terms of assembly, homotetramer. FAD serves as cofactor.

The protein localises to the mitochondrion matrix. It carries out the reaction a short-chain 2,3-saturated fatty acyl-CoA + oxidized [electron-transfer flavoprotein] + H(+) = a short-chain (2E)-enoyl-CoA + reduced [electron-transfer flavoprotein]. The enzyme catalyses butanoyl-CoA + oxidized [electron-transfer flavoprotein] + H(+) = (2E)-butenoyl-CoA + reduced [electron-transfer flavoprotein]. It catalyses the reaction pentanoyl-CoA + oxidized [electron-transfer flavoprotein] + H(+) = (2E)-pentenoyl-CoA + reduced [electron-transfer flavoprotein]. The catalysed reaction is hexanoyl-CoA + oxidized [electron-transfer flavoprotein] + H(+) = (2E)-hexenoyl-CoA + reduced [electron-transfer flavoprotein]. It participates in lipid metabolism; mitochondrial fatty acid beta-oxidation. Functionally, short-chain specific acyl-CoA dehydrogenase is one of the acyl-CoA dehydrogenases that catalyze the first step of mitochondrial fatty acid beta-oxidation, an aerobic process breaking down fatty acids into acetyl-CoA and allowing the production of energy from fats. The first step of fatty acid beta-oxidation consists in the removal of one hydrogen from C-2 and C-3 of the straight-chain fatty acyl-CoA thioester, resulting in the formation of trans-2-enoyl-CoA. Among the different mitochondrial acyl-CoA dehydrogenases, short-chain specific acyl-CoA dehydrogenase acts specifically on acyl-CoAs with saturated 4 to 6 carbons long primary chains. This Mus musculus (Mouse) protein is Short-chain specific acyl-CoA dehydrogenase, mitochondrial (Acads).